The primary structure comprises 245 residues: DNA terminal protein (245 aa).

The Nuclear localization signal motif lies at 4 to 55 (KRLKKKLETKRKKSLLVSEGYSKKETKKLKGRELETVYKKKAHNRKNRERAR). Y194 is modified (O-(5'-phospho-DNA)-tyrosine).

Interacts with the DNA-binding protein P1.

It is found in the virion. Its function is as follows. Acts as a primer for viral genomic replication. DNA terminal protein is covalently linked to the 5'-ends of both strands of the genome through a phosphodiester bond between the beta-hydroxyl group of a tyrosine residue and the 5'-phosphate of the terminal deoxythymidylate. This protein is essential for DNA replication and is involved in the priming of DNA elongation. In Bacillus thuringiensis (Bacillus thuringiensis bacteriophage Bam35c), this protein is DNA terminal protein.